The sequence spans 298 residues: NADH-cytochrome b5 reductase 2 (298 aa).

A helical transmembrane segment spans residues Phe15–Ala38. The FAD-binding FR-type domain maps to Asp49–Glu153. An FAD-binding site is contributed by Gln156–Leu191.

This sequence belongs to the flavoprotein pyridine nucleotide cytochrome reductase family. FAD serves as cofactor.

Its subcellular location is the mitochondrion outer membrane. It carries out the reaction 2 Fe(III)-[cytochrome b5] + NADH = 2 Fe(II)-[cytochrome b5] + NAD(+) + H(+). Its function is as follows. May mediate the reduction of outer membrane cytochrome b5. The chain is NADH-cytochrome b5 reductase 2 (MCR1) from Scheffersomyces stipitis (strain ATCC 58785 / CBS 6054 / NBRC 10063 / NRRL Y-11545) (Yeast).